Consider the following 605-residue polypeptide: Replication protein E1 (605 aa).

The short motif at 76 to 78 (KRK) is the Nuclear localization signal element. Phosphoserine; by host occurs at positions 81 and 89. A Nuclear export signal motif is present at residues 88–97 (LSPRLESISL). Residues 145–308 (HLGTVDIHYT…TIVGHQSTEA (164 aa)) form a DNA-binding region region. One can recognise an SF3 helicase domain in the interval 407 to 557 (VNVIMFLAAL…FPMKPDNTPE (151 aa)). Residue 433 to 440 (GPPNTGKS) coordinates ATP. A Glycyl lysine isopeptide (Lys-Gly) (interchain with G-Cter in SUMO) cross-link involves residue Lys514. The disordered stretch occupies residues 580-605 (DQEDEGENGESQQAFQCSARSANEHL). Polar residues predominate over residues 588–605 (GESQQAFQCSARSANEHL).

The protein belongs to the papillomaviridae E1 protein family. In terms of assembly, can form hexamers. Interacts with E2 protein; this interaction increases E1 DNA binding specificity. Interacts with host DNA polymerase subunit POLA2. Interacts with host single stranded DNA-binding protein RPA1. Interacts with host TOP1; this interaction stimulates the enzymatic activity of TOP1. In terms of processing, phosphorylated. Sumoylated.

Its subcellular location is the host nucleus. It carries out the reaction Couples ATP hydrolysis with the unwinding of duplex DNA by translocating in the 3'-5' direction.. It catalyses the reaction ATP + H2O = ADP + phosphate + H(+). Functionally, ATP-dependent DNA 3'-5' helicase required for initiation of viral DNA replication. It forms a complex with the viral E2 protein. The E1-E2 complex binds to the replication origin which contains binding sites for both proteins. During the initial step, a dimer of E1 interacts with a dimer of protein E2 leading to a complex that binds the viral origin of replication with high specificity. Then, a second dimer of E1 displaces the E2 dimer in an ATP-dependent manner to form the E1 tetramer. Following this, two E1 monomers are added to each half of the site, which results in the formation of two E1 trimers on the viral ori. Subsequently, two hexamers will be created. The double hexamer acts as a bi-directional helicase machinery and unwinds the viral DNA and then recruits the host DNA polymerase to start replication. The polypeptide is Replication protein E1 (Homo sapiens (Human)).